The chain runs to 435 residues: Nuclear hormone receptor family member nhr-136 (435 aa).

The nuclear receptor DNA-binding region spans 50–129 (PSNCKVCRHS…AGMNPSAIQA (80 aa)). 2 NR C4-type zinc fingers span residues 53 to 73 (CKVCRHSATGYHYDVPSCNGC) and 89 to 112 (CLKMRKCLSGTEPVDLSRRMCRAC). In terms of domain architecture, NR LBD spans 194-430 (RDIRKLDELI…RYTRISNLYE (237 aa)).

It belongs to the nuclear hormone receptor family.

It is found in the nucleus. Functionally, orphan nuclear receptor. In Caenorhabditis elegans, this protein is Nuclear hormone receptor family member nhr-136 (nhr-136).